A 101-amino-acid polypeptide reads, in one-letter code: MASSKTFFLLFALLFALALLVSTEAAASEESTKTGSVEGVKDAVCHHGCCRWFHHRCVRCCRSAEEVSVSDTENNAAADAHCRHGCCRWFHGRCIRCCPSA.

Residues 42 to 64 (DAVCHHGCCRWFHHRCVRCCRSA) form a 1; approximate repeat. Positions 42–101 (DAVCHHGCCRWFHHRCVRCCRSAEEVSVSDTENNAAADAHCRHGCCRWFHGRCIRCCPSA) are 2 X approximate repeats. Residues 79 to 101 (DAHCRHGCCRWFHGRCIRCCPSA) form a 2; approximate repeat.

Belongs to the GRP family.

Its function is as follows. May be involved in the control of the cell cycle at the G1/S start transition. The chain is CYC02 protein (CYC02) from Catharanthus roseus (Madagascar periwinkle).